The sequence spans 154 residues: MGLSDGEWQLVLNAWGKVEADIPGHGQEVLIRLFKGHPETLEKFDKFKHLKSEDEMKASEDLKKHGATVLTALGNILKKKGNHEAELKPLAQSHATKHKISVQFLEFISEAIIQVIQSKHPGDFGGDAQAAMGKALELFRNDMAAKYKELGFQG.

One can recognise a Globin domain in the interval 2–148 (GLSDGEWQLV…FRNDMAAKYK (147 aa)). S4 bears the Phosphoserine mark. Residue H65 participates in nitrite binding. H65 provides a ligand contact to O2. T68 carries the phosphothreonine modification. H94 is a heme b binding site.

It belongs to the globin family. In terms of assembly, monomeric.

It is found in the cytoplasm. The protein resides in the sarcoplasm. It carries out the reaction Fe(III)-heme b-[protein] + nitric oxide + H2O = Fe(II)-heme b-[protein] + nitrite + 2 H(+). The catalysed reaction is H2O2 + AH2 = A + 2 H2O. In terms of biological role, monomeric heme protein which primary function is to store oxygen and facilitate its diffusion within muscle tissues. Reversibly binds oxygen through a pentacoordinated heme iron and enables its timely and efficient release as needed during periods of heightened demand. Depending on the oxidative conditions of tissues and cells, and in addition to its ability to bind oxygen, it also has a nitrite reductase activity whereby it regulates the production of bioactive nitric oxide. Under stress conditions, like hypoxia and anoxia, it also protects cells against reactive oxygen species thanks to its pseudoperoxidase activity. This is Myoglobin (MB) from Didelphis virginiana (North American opossum).